The following is an 859-amino-acid chain: ATP-dependent RNA helicase DDX24 (859 aa).

Lysine 17 is subject to N6-acetyllysine. The residue at position 60 (serine 60) is a Phosphoserine. Residues 61-170 (PAKNPSSLFS…KGLEPSQSTA (110 aa)) are disordered. Lysine 71 carries the post-translational modification N6-acetyllysine. Phosphoserine occurs at positions 82 and 94. Positions 94-105 (SPKKKIKLKKSK) are enriched in basic residues. Polar residues predominate over residues 106–115 (NVATEGTSTQ). Over residues 125 to 139 (LEAQGDDMVCDDPEA) the composition is skewed to acidic residues. The short motif at 192–220 (SAWKDLFVPRPVLRALSFLGFSAPTPIQA) is the Q motif element. The 305-residue stretch at 224 to 528 (APAIRDKLDI…RILHKKHTKK (305 aa)) folds into the Helicase ATP-binding domain. ATP is bound at residue 237–244 (AETGSGKT). The tract at residues 262 to 300 (NAAPPPSNTEAPPGETRTEAGAETRSPGKAEAESDALPD) is disordered. Basic and acidic residues predominate over residues 277–293 (TRTEAGAETRSPGKAEA). 2 positions are modified to phosphoserine: serine 287 and serine 295. Residue threonine 302 is modified to Phosphothreonine. The tract at residues 326–376 (SDQALLFGDDDAGEGPSSLIREKPVPKQNENEEENLDKEQTGNLKQELDDK) is disordered. Residue lysine 370 forms a Glycyl lysine isopeptide (Lys-Gly) (interchain with G-Cter in SUMO2) linkage. The DEAD box signature appears at 471–474 (DEAD). A Helicase C-terminal domain is found at 578 to 723 (YLYYFLMQYP…LFPVQTKYMD (146 aa)). Residues lysine 624, lysine 808, and lysine 825 each participate in a glycyl lysine isopeptide (Lys-Gly) (interchain with G-Cter in SUMO2) cross-link. Polar residues-rich tracts occupy residues 799–814 (PLFT…TQSG) and 823–833 (PSKSESALSCL). The tract at residues 799–859 (PLFTESQKTK…EQPQPSTSAN (61 aa)) is disordered.

This sequence belongs to the DEAD box helicase family. DDX24/MAK5 subfamily. As to quaternary structure, interacts with FADD. Interacts with RIPK1; this interaction disrupts RLR signaling activation of IFN-dependent transcription factor IRF7. Interacts with NIP7. Interacts with EP300; this interaction prevents TP53 acetylation mediated by EP300. In terms of assembly, (Microbial infection) Interacts with HIV-1 virus Gag and Rev proteins. In terms of processing, ubiquitinated by MDM2 without targeting DDX24 for proteasomal degradation. Instead, polyubiquitinated DDX24 promotes interaction with NIP7, a component of pre-rRNP processing complex, and associates with pre-rRNA molecules and pre-ribosomal particles. Ubiquitous. Most abundant in heart and brain, but with lowest levels in thymus and small intestine.

It localises to the cytoplasm. The protein resides in the nucleus. It carries out the reaction ATP + H2O = ADP + phosphate + H(+). In terms of biological role, ATP-dependent RNA helicase that plays a role in various aspects of RNA metabolism including pre-mRNA splicing and is thereby involved in different biological processes such as cell cycle regulation or innate immunity. Plays an inhibitory role in TP53 transcriptional activity and subsequently in TP53 controlled cell growth arrest and senescence by inhibiting its EP300 mediated acetylation. Negatively regulates cytosolic RNA-mediated innate immune signaling at least in part by affecting RIPK1/IRF7 interactions. Alternatively, possesses antiviral activity by recognizing gammaherpesvirus transcripts in the context of lytic reactivation. Plays an essential role in cell cycle regulation in vascular smooth muscle cells by interacting with and regulating FANCA (Fanconi anemia complementation group A) mRNA. Its function is as follows. (Microbial infection) Plays a positive role in HIV-1 infection by promoting Rev-dependent nuclear export of viral RNAs and their packaging into virus particles. In Homo sapiens (Human), this protein is ATP-dependent RNA helicase DDX24 (DDX24).